The following is a 91-amino-acid chain: DNA-directed RNA polymerase subunit omega (91 aa).

This sequence belongs to the RNA polymerase subunit omega family. The RNAP catalytic core consists of 2 alpha, 1 beta, 1 beta' and 1 omega subunit. When a sigma factor is associated with the core the holoenzyme is formed, which can initiate transcription.

The enzyme catalyses RNA(n) + a ribonucleoside 5'-triphosphate = RNA(n+1) + diphosphate. Functionally, promotes RNA polymerase assembly. Latches the N- and C-terminal regions of the beta' subunit thereby facilitating its interaction with the beta and alpha subunits. The chain is DNA-directed RNA polymerase subunit omega from Aeromonas hydrophila subsp. hydrophila (strain ATCC 7966 / DSM 30187 / BCRC 13018 / CCUG 14551 / JCM 1027 / KCTC 2358 / NCIMB 9240 / NCTC 8049).